The following is a 288-amino-acid chain: N-glycosylase/DNA lyase (288 aa).

8-oxoguanine-binding residues include Gln35, Ser62, and Trp73. Positions 134–203 (NPLVLVERPS…VACASISSEM (70 aa)) are helix-hairpin-helix. The Schiff-base intermediate with DNA role is filled by Lys160. Residues Phe164 and Pro189 each contribute to the 8-oxoguanine site. Residue Asp191 is part of the active site. Residues Asp238 and Trp242 each coordinate 8-oxoguanine.

The protein belongs to the archaeal N-glycosylase/DNA lyase (AGOG) family.

The enzyme catalyses 2'-deoxyribonucleotide-(2'-deoxyribose 5'-phosphate)-2'-deoxyribonucleotide-DNA = a 3'-end 2'-deoxyribonucleotide-(2,3-dehydro-2,3-deoxyribose 5'-phosphate)-DNA + a 5'-end 5'-phospho-2'-deoxyribonucleoside-DNA + H(+). Functionally, DNA repair enzyme that is part of the base excision repair (BER) pathway; protects from oxidative damage by removing the major product of DNA oxidation, 8-oxoguanine (GO), from single- and double-stranded DNA substrates. This chain is N-glycosylase/DNA lyase, found in Aeropyrum pernix (strain ATCC 700893 / DSM 11879 / JCM 9820 / NBRC 100138 / K1).